The primary structure comprises 445 residues: Clusterin (445 aa).

Residues 1 to 22 form the signal peptide; it reads MMKTLLLLVGLLLTWDNGRVLG. Positions 78 to 81 match the Nuclear localization signal motif; it reads KKKK. N-linked (GlcNAc...) asparagine glycans are attached at residues N86 and N103. 5 disulfide bridges follow: C102-C309, C113-C301, C116-C298, C121-C291, and C129-C281. S133 carries the phosphoserine modification. N145, N277, N287, N350, and N370 each carry an N-linked (GlcNAc...) asparagine glycan. S392 is subject to Phosphoserine. The Nuclear localization signal motif lies at 439–443; it reads RQKHR.

Belongs to the clusterin family. As to quaternary structure, antiparallel disulfide-linked heterodimer of an alpha chain and a beta chain. Self-associates and forms higher oligomers. Interacts with a broad range of misfolded proteins, including APP, APOC2 and LYZ. Slightly acidic pH promotes interaction with misfolded proteins. Forms high-molecular weight oligomers upon interaction with misfolded proteins. Interacts with APOA1, LRP2, CLUAP1 and PON1. Interacts with the complement membrane attack complex. Interacts (via alpha chain) with XRCC6. Interacts with SYVN1, COMMD1, BTRC, CUL1 and with ubiquitin and SCF (SKP1-CUL1-F-box protein) E3 ubiquitin-protein ligase complexes. Interacts (via alpha chain) with BAX in stressed cells, where BAX undergoes a conformation change leading to association with the mitochondrial membrane. Does not interact with BAX in unstressed cells. Found in a complex with LTF, CLU, EPPIN and SEMG1. Interacts (immaturely glycosylated pre-secreted form) with HSPA5; this interaction promotes CLU stability and facilitates stress-induced CLU retrotranslocation from the secretory pathway to the mitochondria, thereby reducing stress-induced apoptosis by stabilizing mitochondrial membrane integrity. Interacts with BCL2L1; this interaction releases and activates BAX and promotes cell death. Interacts with TGFBR2 and ACVR1. Interacts (secreted form) with STMN3; this interaction may act as an important modulator during neuronal differentiation. Interacts with VLDLR and LRP8. In terms of processing, proteolytically cleaved on its way through the secretory system, probably within the Golgi lumen. Proteolytic cleavage is not necessary for its chaperone activity. All non-secreted forms are not proteolytically cleaved. Chaperone activity of uncleaved forms is dependent on a non-reducing environment. This proteolytic maturation is disulfide bond formation dependent. Post-translationally, polyubiquitinated, leading to proteasomal degradation. Under cellular stress, the intracellular level of cleaved form is reduced due to proteasomal degradation. Heavily N-glycosylated. About 30% of the protein mass is comprised of complex N-linked carbohydrate. Endoplasmic reticulum (ER) stress induces changes in glycosylation status and increases level of hypoglycosylated forms. Core carbohydrates are essential for chaperone activity. Non-secreted forms are hypoglycosylated or unglycosylated.

It is found in the secreted. Its subcellular location is the nucleus. It localises to the cytoplasm. The protein localises to the mitochondrion membrane. The protein resides in the cytosol. It is found in the microsome. Its subcellular location is the endoplasmic reticulum. It localises to the mitochondrion. The protein localises to the perinuclear region. The protein resides in the cytoplasmic vesicle. It is found in the secretory vesicle. Its subcellular location is the chromaffin granule. Functions as extracellular chaperone that prevents aggregation of non native proteins. Prevents stress-induced aggregation of blood plasma proteins. Inhibits formation of amyloid fibrils by APP, APOC2, B2M, CALCA, CSN3, SNCA and aggregation-prone LYZ variants (in vitro). Does not require ATP. Maintains partially unfolded proteins in a state appropriate for subsequent refolding by other chaperones, such as HSPA8/HSC70. Does not refold proteins by itself. Binding to cell surface receptors triggers internalization of the chaperone-client complex and subsequent lysosomal or proteasomal degradation. When secreted, protects cells against apoptosis and against cytolysis by complement: inhibits assembly of the complement membrane attack complex (MAC) by preventing polymerization of C9 pore component of the MAC complex. Intracellular forms interact with ubiquitin and SCF (SKP1-CUL1-F-box protein) E3 ubiquitin-protein ligase complexes and promote the ubiquitination and subsequent proteasomal degradation of target proteins. Promotes proteasomal degradation of COMMD1 and IKBKB. Modulates NF-kappa-B transcriptional activity. Following stress, promotes apoptosis. Inhibits apoptosis when associated with the mitochondrial membrane by interference with BAX-dependent release of cytochrome c into the cytoplasm. Plays a role in the regulation of cell proliferation. An intracellular form suppresses stress-induced apoptosis by stabilizing mitochondrial membrane integrity through interaction with HSPA5. Secreted form does not affect caspase or BAX-mediated intrinsic apoptosis and TNF-induced NF-kappa-B-activity. Secreted form act as an important modulator during neuronal differentiation through interaction with STMN3. Plays a role in the clearance of immune complexes that arise during cell injury. The polypeptide is Clusterin (CLU) (Canis lupus familiaris (Dog)).